The sequence spans 410 residues: D-3-phosphoglycerate dehydrogenase (410 aa).

NAD(+)-binding positions include 162 to 163, Asp-182, 239 to 241, and Asp-265; these read HI and AAR. Residue Arg-241 is part of the active site. Residue Glu-270 is part of the active site. His-293 acts as the Proton donor in catalysis. An NAD(+)-binding site is contributed by 293–296; the sequence is HIGG. An ACT domain is found at 341-410; that stretch reads RLLHIHENRP…DGTIRARVLY (70 aa).

This sequence belongs to the D-isomer specific 2-hydroxyacid dehydrogenase family.

It carries out the reaction (2R)-3-phosphoglycerate + NAD(+) = 3-phosphooxypyruvate + NADH + H(+). The enzyme catalyses (R)-2-hydroxyglutarate + NAD(+) = 2-oxoglutarate + NADH + H(+). The protein operates within amino-acid biosynthesis; L-serine biosynthesis; L-serine from 3-phospho-D-glycerate: step 1/3. In bacteria displays feedback inhibition by L-serine. Catalyzes the reversible oxidation of 3-phospho-D-glycerate to 3-phosphonooxypyruvate, the first step of the phosphorylated L-serine biosynthesis pathway. Also catalyzes the reversible oxidation of 2-hydroxyglutarate to 2-oxoglutarate. The chain is D-3-phosphoglycerate dehydrogenase (serA) from Haemophilus influenzae (strain ATCC 51907 / DSM 11121 / KW20 / Rd).